The primary structure comprises 288 residues: Protein CREG2 (288 aa).

Positions 1–31 are cleaved as a signal peptide; that stretch reads MSLSGRERPAWPGSRLSWLLCCSALLSPAAG. The interval 78–100 is disordered; that stretch reads AHKEDTHLRPRGSARARPAPAAR. An N-linked (GlcNAc...) asparagine glycan is attached at Asn-164.

It belongs to the CREG family. As to expression, brain specific.

It is found in the secreted. The chain is Protein CREG2 (Creg2) from Mus musculus (Mouse).